Reading from the N-terminus, the 350-residue chain is MPVLHNRISNDALKAKMLAESEPRTTISFYKYFHIADPKVTRAALYQLFTALNVFGRVYLAHEGMNAQISVPASNVETFRAQLYAFDPALEGLRLNIALDDDGKSFWVLRMKVRDRIVADGIDDPHFDASNVGEYLQAAEVNAMLDDPDALFIDMRNHYEYEVGHFENALEIPADTFREQLPKAVEMMQAHKDKKIVMYCTGGIRCEKASAWMKHNGFNKVWHIEGGIIEYARKAREQGLPVRFIGKNFVFDERMGERISDEIIAHCHQCGAPCDSHTNCKNDGCHLLFIQCPVCAEKYKGCCSEICCEESALPPEEQRRRRAGRENGNKIFNKSRGRLNTTLGIPEPTE.

A Rhodanese domain is found at 146 to 240 (DDPDALFIDM…YARKAREQGL (95 aa)). Cys200 functions as the Cysteine persulfide intermediate in the catalytic mechanism.

Belongs to the TrhO family.

The catalysed reaction is uridine(34) in tRNA + AH2 + O2 = 5-hydroxyuridine(34) in tRNA + A + H2O. Catalyzes oxygen-dependent 5-hydroxyuridine (ho5U) modification at position 34 in tRNAs. The sequence is that of tRNA uridine(34) hydroxylase from Shigella dysenteriae serotype 1 (strain Sd197).